A 417-amino-acid polypeptide reads, in one-letter code: NADH-dependent phenylglyoxylate dehydrogenase subunit alpha (417 aa).

Dimer of heteropentamers composed of an alpha (PadG), a beta (PadI), a gamma (PadE), a delta (PadF) and an epsilon (PadH) subunit.

It catalyses the reaction phenylglyoxylate + NAD(+) + CoA = benzoyl-CoA + CO2 + NADH. Its activity is regulated as follows. Activated by magnesium ions and thiamine diphosphate. In terms of biological role, involved in the anaerobic metabolism of phenylalanine and phenylacetate. Catalyzes the oxidative decarboxylation of phenylglyoxylate to benzoyl-CoA and CO(2). It can also react slowly with 2-oxo-3-methylbutanoate and use different electron acceptors such as benzyl viologen, methyl viologen, FAD or FMN, but NAD seems to be the physiological electron acceptor. Also catalyzes an isotope exchange between CO(2) and the carboxyl group which proves partial or complete reversibility of the oxidative decarboxylation reaction. In Aromatoleum evansii (Azoarcus evansii), this protein is NADH-dependent phenylglyoxylate dehydrogenase subunit alpha (padG).